The chain runs to 272 residues: Sulfate transporter CysZ (272 aa).

Helical transmembrane passes span 29-49 (FVIMPIVLNTILLCGLFWLFI), 66-86 (WLSFLSVILLTLSILTILLLF), 148-168 (IIALFLLSFIPLVGQTIVPVL), and 219-239 (FVPVINLLIMPVAVCGATLMW).

This sequence belongs to the CysZ family.

The protein resides in the cell inner membrane. In terms of biological role, high affinity, high specificity proton-dependent sulfate transporter, which mediates sulfate uptake. Provides the sulfur source for the cysteine synthesis pathway. This is Sulfate transporter CysZ from Haemophilus influenzae (strain PittGG).